The following is a 208-amino-acid chain: Uracil phosphoribosyltransferase (208 aa).

5-phospho-alpha-D-ribose 1-diphosphate-binding positions include Arg78, Arg103, and 130 to 138 (DPMLATGGS). Uracil-binding positions include Ile193 and 198-200 (GDA). Asp199 is a binding site for 5-phospho-alpha-D-ribose 1-diphosphate.

It belongs to the UPRTase family. Mg(2+) serves as cofactor.

The enzyme catalyses UMP + diphosphate = 5-phospho-alpha-D-ribose 1-diphosphate + uracil. The protein operates within pyrimidine metabolism; UMP biosynthesis via salvage pathway; UMP from uracil: step 1/1. Allosterically activated by GTP. Its function is as follows. Catalyzes the conversion of uracil and 5-phospho-alpha-D-ribose 1-diphosphate (PRPP) to UMP and diphosphate. The polypeptide is Uracil phosphoribosyltransferase (Yersinia enterocolitica serotype O:8 / biotype 1B (strain NCTC 13174 / 8081)).